The following is a 94-amino-acid chain: Aspartyl/glutamyl-tRNA(Asn/Gln) amidotransferase subunit C (94 aa).

Positions 72-94 (PREKALQGAPEVSEGQFKVPRVV) are disordered.

Belongs to the GatC family. In terms of assembly, heterotrimer of A, B and C subunits.

It carries out the reaction L-glutamyl-tRNA(Gln) + L-glutamine + ATP + H2O = L-glutaminyl-tRNA(Gln) + L-glutamate + ADP + phosphate + H(+). It catalyses the reaction L-aspartyl-tRNA(Asn) + L-glutamine + ATP + H2O = L-asparaginyl-tRNA(Asn) + L-glutamate + ADP + phosphate + 2 H(+). Allows the formation of correctly charged Asn-tRNA(Asn) or Gln-tRNA(Gln) through the transamidation of misacylated Asp-tRNA(Asn) or Glu-tRNA(Gln) in organisms which lack either or both of asparaginyl-tRNA or glutaminyl-tRNA synthetases. The reaction takes place in the presence of glutamine and ATP through an activated phospho-Asp-tRNA(Asn) or phospho-Glu-tRNA(Gln). The polypeptide is Aspartyl/glutamyl-tRNA(Asn/Gln) amidotransferase subunit C (Moorella thermoacetica (strain ATCC 39073 / JCM 9320)).